The primary structure comprises 547 residues: Chaperonin GroEL (547 aa).

ATP is bound by residues 30-33 (TLGP), lysine 51, 87-91 (DGTTT), glycine 415, and aspartate 495. Residues 526 to 547 (KKESAGGGGMPGGMGGMGGMDF) are disordered. The segment covering 530–547 (AGGGGMPGGMGGMGGMDF) has biased composition (gly residues).

It belongs to the chaperonin (HSP60) family. As to quaternary structure, forms a cylinder of 14 subunits composed of two heptameric rings stacked back-to-back. Interacts with the co-chaperonin GroES.

The protein localises to the cytoplasm. The enzyme catalyses ATP + H2O + a folded polypeptide = ADP + phosphate + an unfolded polypeptide.. Together with its co-chaperonin GroES, plays an essential role in assisting protein folding. The GroEL-GroES system forms a nano-cage that allows encapsulation of the non-native substrate proteins and provides a physical environment optimized to promote and accelerate protein folding. The sequence is that of Chaperonin GroEL from Hyphomonas neptunium (strain ATCC 15444).